The chain runs to 529 residues: MQNLVKEFIEKVLETNIVLEKPKDVSLGHYATPVAFSLAKELKKSPMLIAQELVTKLENPSLFEKIEAVNGFINFKLSPLFLQSLVDDALSNKENFAKQHKKSEKILLEYVSANPTGPLHIGHARGAIFGDSLARVGKYLGYDITTEYYINDAGSQMDLLGLSVNLAARDFIYGEDVSYPEVYYRGDYLIDIANQIIQDYGKDYLYDEKNFKDIALLGKDFVMNLIIKDLKDLGIEFDNFVSEKSLYSSWNETKRVLEENGSLYDKDDKTYLKSTQYGDDSDRVVVRDNGIPTYLAGDIIYHKNKYDRNFDRYINIWGADHHGYITRVKAAIEFLGNDSSKLEVLLSQMVQLLKGGEPYKMSKRKGNVILMSEITEEIGSDALRFIFLTKKSDTHLEFDIDTLKNQDSSNPIFYINYAHARINQVFVKAGVNFDDIKDISFEKLNQDGLNLVYESLLLESILVEAFAKRDMQKITEYLYNLASSIHKFYNEHKIIGSDEQNLYLKVLSIAALSIKVGLKLLGIEAKEIM.

The short motif at 113-123 (ANPTGPLHIGH) is the 'HIGH' region element.

The protein belongs to the class-I aminoacyl-tRNA synthetase family. Monomer.

The protein resides in the cytoplasm. The catalysed reaction is tRNA(Arg) + L-arginine + ATP = L-arginyl-tRNA(Arg) + AMP + diphosphate. In Aliarcobacter butzleri (strain RM4018) (Arcobacter butzleri), this protein is Arginine--tRNA ligase.